The sequence spans 66 residues: Large ribosomal subunit protein uL29 (66 aa).

The protein belongs to the universal ribosomal protein uL29 family.

In Borrelia hermsii (strain HS1 / DAH), this protein is Large ribosomal subunit protein uL29.